The sequence spans 177 residues: Disulfide bond formation protein B (177 aa).

Residues 1–14 (MLALLKQFSEKRFV) are Cytoplasmic-facing. Residues 15-31 (WFLLAFSSLALESTALY) traverse the membrane as a helical segment. The Periplasmic segment spans residues 32–49 (FQYGMGLQPCVLCVYERL). A disulfide bridge links cysteine 41 with cysteine 44. A helical transmembrane segment spans residues 50–65 (AMIGLFVAGTIALLQP). Over 66 to 72 (RVFILRL) the chain is Cytoplasmic. A helical membrane pass occupies residues 73-90 (IALALGLFSSIKGLLISF). At 91–145 (RHLDLQMNPAPWKQCEFIPNFPETLPFHQWFPFIFNPTGSCNESQWSLFGLTMVQ) the chain is on the periplasmic side. The cysteines at positions 105 and 131 are disulfide-linked. The chain crosses the membrane as a helical span at residues 146–164 (WLVVIFSLYVVILTLLLIA). The Cytoplasmic segment spans residues 165–177 (QVIKTRKQRRLFN).

This sequence belongs to the DsbB family.

Its subcellular location is the cell inner membrane. Functionally, required for disulfide bond formation in some periplasmic proteins. Acts by oxidizing the DsbA protein. The protein is Disulfide bond formation protein B of Haemophilus influenzae (strain ATCC 51907 / DSM 11121 / KW20 / Rd).